The sequence spans 369 residues: N-succinylamino acid racemase (369 aa).

Residue Lys163 is the Proton donor of the active site. The Mg(2+) site is built by Asp188, Glu213, and Asp238. Lys262 acts as the Proton acceptor in catalysis.

The protein belongs to the mandelate racemase/muconate lactonizing enzyme family. MenC type 2 subfamily. Homooctamer. Tetramer of dimers. It depends on a divalent metal cation as a cofactor.

It carries out the reaction (1R,6R)-6-hydroxy-2-succinyl-cyclohexa-2,4-diene-1-carboxylate = 2-succinylbenzoate + H2O. In terms of biological role, acts as a N-succinylamino acid racemase (NSAR) that catalyzes the racemization of N-succinyl-L-phenylglycine. Also converts 2-succinyl-6-hydroxy-2,4-cyclohexadiene-1-carboxylate (SHCHC) to 2-succinylbenzoate (OSB). Catalyzes both N-succinylamino acid racemization and OSB synthesis at equivalent rates. However, NSAR activity is probably the protein's biological function, because menaquinone biosynthesis genes are missing in this species. The protein is N-succinylamino acid racemase of Thermus thermophilus (strain ATCC 27634 / DSM 579 / HB8).